The primary structure comprises 174 residues: MTQPLFLIGPRGCGKTTVGMALADSLNRRFVDTDLWLQSQLNMTVAEIVEREEWAGFRARETAALEAVTAPSTVIATGGGIILTEFNRHFMQNNGIVVYLCAPVSVLVNRLQAAPEEDLRPTLTGKPLSEEVQEVLEERDALYREVAHIIIDATNEPSQVISEIRSALAQTINC.

Residue 12–17 (GCGKTT) participates in ATP binding. 2 residues coordinate Mg(2+): threonine 16 and aspartate 32. Residues aspartate 34, arginine 58, and glycine 79 each contribute to the substrate site. Residues 112–126 (QAAPEEDLRPTLTGK) are LID domain. Arginine 120 contributes to the ATP binding site. A substrate-binding site is contributed by arginine 139.

Belongs to the shikimate kinase family. AroL subfamily. In terms of assembly, monomer. Requires Mg(2+) as cofactor.

Its subcellular location is the cytoplasm. The enzyme catalyses shikimate + ATP = 3-phosphoshikimate + ADP + H(+). It participates in metabolic intermediate biosynthesis; chorismate biosynthesis; chorismate from D-erythrose 4-phosphate and phosphoenolpyruvate: step 5/7. Functionally, catalyzes the specific phosphorylation of the 3-hydroxyl group of shikimic acid using ATP as a cosubstrate. The polypeptide is Shikimate kinase 2 (Escherichia coli O1:K1 / APEC).